The primary structure comprises 208 residues: Ion-translocating oxidoreductase complex subunit G (208 aa).

Residues 9–29 traverse the membrane as a helical segment; the sequence is GVTLAVFAALTTGLTAMVNAL. T174 carries the post-translational modification FMN phosphoryl threonine.

The protein belongs to the RnfG family. The complex is composed of six subunits: RnfA, RnfB, RnfC, RnfD, RnfE and RnfG. Requires FMN as cofactor.

It is found in the cell inner membrane. Part of a membrane-bound complex that couples electron transfer with translocation of ions across the membrane. The polypeptide is Ion-translocating oxidoreductase complex subunit G (Cronobacter sakazakii (strain ATCC BAA-894) (Enterobacter sakazakii)).